The primary structure comprises 648 residues: ATPase family AAA domain-containing protein 3B (648 aa).

2 disordered regions span residues 1-54 (MSWL…DPTG) and 111-134 (QAEERRKTLSEETRQHQARAQYQD). At Ser2 the chain carries N-acetylserine. The Mitochondrial intermembrane segment spans residues 2-246 (SWLFGVNKGP…FRAFVTDRDK (245 aa)). The segment covering 17-26 (GPPPPLPPAQ) has biased composition (pro residues). Basic and acidic residues-rich tracts occupy residues 32-48 (GGDRGLGDRPAPKDKWS) and 111-125 (QAEERRKTLSEETRQ). The stretch at 69 to 214 (RYAKEALNLA…DIIREQIRLK (146 aa)) forms a coiled coil. The segment at residues 247 to 264 (VTATVAGLTLLAVGVYSA) is an intramembrane region (helical). Residues 265-648 (KNATAVTGRF…PFCPPGHPLL (384 aa)) lie on the Mitochondrial intermembrane side of the membrane. 352-359 (GPPGTGKT) contacts ATP. An N6-acetyllysine mark is found at Lys427 and Lys495.

It belongs to the AAA ATPase family. In terms of assembly, forms heterooligomers with ATAD3A. Interacts with components of the mitochondrial ribosome, including MRPL11 and MRPS18B, and with other proteins involved in mitochondrial RNA metabolism, possibly via interaction with ATAD3A. Interacts with GADD45GIP1. In terms of tissue distribution, tends to be down-regulated in differentiated cells and re-expressed in pluripotent stem cells or cancer cells (at protein level).

The protein localises to the mitochondrion inner membrane. Its function is as follows. May play a role in a mitochondrial network organization typical for stem cells, characterized by reduced mitochondrial metabolism, low mtDNA copies and fragmentated mitochondrial network. May act by suppressing ATAD3A function, interfering with ATAD3A interaction with matrix nucleoid complexes. This is ATPase family AAA domain-containing protein 3B (ATAD3B) from Homo sapiens (Human).